The following is a 143-amino-acid chain: Sirohydrochlorin cobaltochelatase (143 aa).

The active-site Proton acceptor is His9. His9 serves as a coordination point for Co(2+). His9 contributes to the Ni(2+) binding site. Substrate-binding positions include Glu45 and 70-75; that span reads LAHGNH. His75 contributes to the Co(2+) binding site. His75 is a Ni(2+) binding site.

The protein belongs to the CbiX family. CbiXS subfamily. Homotetramer; dimer of dimers.

It carries out the reaction Co-sirohydrochlorin + 2 H(+) = sirohydrochlorin + Co(2+). The catalysed reaction is Ni-sirohydrochlorin + 2 H(+) = sirohydrochlorin + Ni(2+). It functions in the pathway cofactor biosynthesis; adenosylcobalamin biosynthesis; cob(II)yrinate a,c-diamide from sirohydrochlorin (anaerobic route): step 1/10. Functionally, catalyzes the insertion of Co(2+) into sirohydrochlorin as part of the anaerobic pathway to cobalamin biosynthesis. Involved in the biosynthesis of the unique nickel-containing tetrapyrrole coenzyme F430, the prosthetic group of methyl-coenzyme M reductase (MCR), which plays a key role in methanogenesis and anaerobic methane oxidation. Catalyzes the insertion of Ni(2+) into sirohydrochlorin to yield Ni-sirohydrochlorin. The polypeptide is Sirohydrochlorin cobaltochelatase (Methanococcus aeolicus (strain ATCC BAA-1280 / DSM 17508 / OCM 812 / Nankai-3)).